A 465-amino-acid chain; its full sequence is UDP-N-acetylmuramate--L-alanine ligase (465 aa).

Position 114–120 (114–120) interacts with ATP; it reads GTHGKTT.

The protein belongs to the MurCDEF family.

Its subcellular location is the cytoplasm. The catalysed reaction is UDP-N-acetyl-alpha-D-muramate + L-alanine + ATP = UDP-N-acetyl-alpha-D-muramoyl-L-alanine + ADP + phosphate + H(+). Its pathway is cell wall biogenesis; peptidoglycan biosynthesis. In terms of biological role, cell wall formation. This chain is UDP-N-acetylmuramate--L-alanine ligase, found in Chelativorans sp. (strain BNC1).